A 599-amino-acid chain; its full sequence is Putative sensor histidine kinase NtrY-like (599 aa).

Helical transmembrane passes span 17-37 (ILIL…FYVI), 44-64 (FSTI…LGIL), 85-105 (IVIA…VFSV), and 285-305 (IMFI…GVLF). The HAMP domain maps to 307–361 (AQIVKPIKKLVTATDKVKDGDLTVQVPENEVDKDEIGTLYVAFNRMIKQLSRQQR). One can recognise a Histidine kinase domain in the interval 378–589 (KVAHEIKNPL…IIDIKFDLKE (212 aa)). H381 bears the Phosphohistidine; by autocatalysis mark.

It is found in the cell membrane. It catalyses the reaction ATP + protein L-histidine = ADP + protein N-phospho-L-histidine.. In terms of biological role, member of the two-component regulatory system RT0603/RT0550. This is Putative sensor histidine kinase NtrY-like from Rickettsia typhi (strain ATCC VR-144 / Wilmington).